Here is a 315-residue protein sequence, read N- to C-terminus: 4-hydroxy-3-methylbut-2-enyl diphosphate reductase (315 aa).

Cysteine 12 serves as a coordination point for [4Fe-4S] cluster. Histidine 43 and histidine 81 together coordinate (2E)-4-hydroxy-3-methylbut-2-enyl diphosphate. 2 residues coordinate dimethylallyl diphosphate: histidine 43 and histidine 81. Histidine 43 and histidine 81 together coordinate isopentenyl diphosphate. Cysteine 103 contributes to the [4Fe-4S] cluster binding site. Histidine 131 provides a ligand contact to (2E)-4-hydroxy-3-methylbut-2-enyl diphosphate. Histidine 131 contacts dimethylallyl diphosphate. Histidine 131 is a binding site for isopentenyl diphosphate. Glutamate 133 acts as the Proton donor in catalysis. Threonine 170 is a (2E)-4-hydroxy-3-methylbut-2-enyl diphosphate binding site. Position 198 (cysteine 198) interacts with [4Fe-4S] cluster. (2E)-4-hydroxy-3-methylbut-2-enyl diphosphate contacts are provided by serine 226, asparagine 228, and serine 271. Serine 226, asparagine 228, and serine 271 together coordinate dimethylallyl diphosphate. Positions 226, 228, and 271 each coordinate isopentenyl diphosphate.

The protein belongs to the IspH family. It depends on [4Fe-4S] cluster as a cofactor.

It carries out the reaction isopentenyl diphosphate + 2 oxidized [2Fe-2S]-[ferredoxin] + H2O = (2E)-4-hydroxy-3-methylbut-2-enyl diphosphate + 2 reduced [2Fe-2S]-[ferredoxin] + 2 H(+). The catalysed reaction is dimethylallyl diphosphate + 2 oxidized [2Fe-2S]-[ferredoxin] + H2O = (2E)-4-hydroxy-3-methylbut-2-enyl diphosphate + 2 reduced [2Fe-2S]-[ferredoxin] + 2 H(+). It participates in isoprenoid biosynthesis; dimethylallyl diphosphate biosynthesis; dimethylallyl diphosphate from (2E)-4-hydroxy-3-methylbutenyl diphosphate: step 1/1. The protein operates within isoprenoid biosynthesis; isopentenyl diphosphate biosynthesis via DXP pathway; isopentenyl diphosphate from 1-deoxy-D-xylulose 5-phosphate: step 6/6. In terms of biological role, catalyzes the conversion of 1-hydroxy-2-methyl-2-(E)-butenyl 4-diphosphate (HMBPP) into a mixture of isopentenyl diphosphate (IPP) and dimethylallyl diphosphate (DMAPP). Acts in the terminal step of the DOXP/MEP pathway for isoprenoid precursor biosynthesis. In Anoxybacillus flavithermus (strain DSM 21510 / WK1), this protein is 4-hydroxy-3-methylbut-2-enyl diphosphate reductase.